A 224-amino-acid polypeptide reads, in one-letter code: Adenylate kinase (224 aa).

Residue G10–T15 coordinates ATP. An NMP region spans residues S30–I59. AMP-binding positions include S31, R36, D57 to I59, G83 to R86, and Q90. Residues G124–D161 are LID. An ATP-binding site is contributed by R125. Positions 128 and 131 each coordinate Zn(2+). ATP is bound at residue V134 to Y135. Residues C148 and C151 each contribute to the Zn(2+) site. AMP is bound by residues R158 and R169. Residue G197 coordinates ATP.

Belongs to the adenylate kinase family. In terms of assembly, monomer.

The protein localises to the cytoplasm. The enzyme catalyses AMP + ATP = 2 ADP. The protein operates within purine metabolism; AMP biosynthesis via salvage pathway; AMP from ADP: step 1/1. Catalyzes the reversible transfer of the terminal phosphate group between ATP and AMP. Plays an important role in cellular energy homeostasis and in adenine nucleotide metabolism. The sequence is that of Adenylate kinase from Thermococcus kodakarensis (strain ATCC BAA-918 / JCM 12380 / KOD1) (Pyrococcus kodakaraensis (strain KOD1)).